A 345-amino-acid polypeptide reads, in one-letter code: tRNA dimethylallyltransferase (345 aa).

9–16 (GPTASGKS) contacts ATP. 11 to 16 (TASGKS) is a substrate binding site. 2 interaction with substrate tRNA regions span residues 34 to 37 (DSMQ) and 195 to 199 (QRMIR).

This sequence belongs to the IPP transferase family. Monomer. Mg(2+) is required as a cofactor.

The enzyme catalyses adenosine(37) in tRNA + dimethylallyl diphosphate = N(6)-dimethylallyladenosine(37) in tRNA + diphosphate. In terms of biological role, catalyzes the transfer of a dimethylallyl group onto the adenine at position 37 in tRNAs that read codons beginning with uridine, leading to the formation of N6-(dimethylallyl)adenosine (i(6)A). This is tRNA dimethylallyltransferase from Orientia tsutsugamushi (strain Ikeda) (Rickettsia tsutsugamushi).